A 67-amino-acid chain; its full sequence is Cell division protein ZapB (67 aa).

Residues 3-59 (LELLSQLETKIQTALETIELLKLELDEEKEKAANLAEQNHQLKQELSSWNDKITGLV) adopt a coiled-coil conformation.

The protein belongs to the ZapB family. In terms of assembly, homodimer. The ends of the coiled-coil dimer bind to each other, forming polymers. Interacts with FtsZ.

The protein resides in the cytoplasm. Non-essential, abundant cell division factor that is required for proper Z-ring formation. It is recruited early to the divisome by direct interaction with FtsZ, stimulating Z-ring assembly and thereby promoting cell division earlier in the cell cycle. Its recruitment to the Z-ring requires functional FtsA or ZipA. The chain is Cell division protein ZapB from Shewanella amazonensis (strain ATCC BAA-1098 / SB2B).